The chain runs to 280 residues: 4-diphosphocytidyl-2-C-methyl-D-erythritol kinase (280 aa).

The active site involves Lys11. 95 to 105 (PVAAGLGGGSS) contacts ATP. Asp137 is a catalytic residue.

Belongs to the GHMP kinase family. IspE subfamily.

It carries out the reaction 4-CDP-2-C-methyl-D-erythritol + ATP = 4-CDP-2-C-methyl-D-erythritol 2-phosphate + ADP + H(+). It functions in the pathway isoprenoid biosynthesis; isopentenyl diphosphate biosynthesis via DXP pathway; isopentenyl diphosphate from 1-deoxy-D-xylulose 5-phosphate: step 3/6. Functionally, catalyzes the phosphorylation of the position 2 hydroxy group of 4-diphosphocytidyl-2C-methyl-D-erythritol. In Pelobacter propionicus (strain DSM 2379 / NBRC 103807 / OttBd1), this protein is 4-diphosphocytidyl-2-C-methyl-D-erythritol kinase.